Reading from the N-terminus, the 163-residue chain is Intron-encoded endonuclease I-PpoI (163 aa).

As to quaternary structure, homodimer. Zn(2+) is required as a cofactor.

Functionally, mediates the homing of a group I intron in the ribosomal DNA. Makes a four-base staggered cut in its ribosomal DNA target sequence. The polypeptide is Intron-encoded endonuclease I-PpoI (Physarum polycephalum (Slime mold)).